The primary structure comprises 657 residues: Methionine--tRNA ligase (657 aa).

Residues 13-23 carry the 'HIGH' region motif; that stretch reads YYPSGNLHIGH. A 'KMSKS' region motif is present at residues 308-312; the sequence is KMSKS. Lys-311 is an ATP binding site. Residues 557–657 form the tRNA-binding domain; the sequence is DFDKVEIKAA…SAIPNGAVIK (101 aa).

Belongs to the class-I aminoacyl-tRNA synthetase family. MetG type 2B subfamily. Homodimer.

The protein localises to the cytoplasm. The enzyme catalyses tRNA(Met) + L-methionine + ATP = L-methionyl-tRNA(Met) + AMP + diphosphate. Functionally, is required not only for elongation of protein synthesis but also for the initiation of all mRNA translation through initiator tRNA(fMet) aminoacylation. The chain is Methionine--tRNA ligase from Staphylococcus aureus (strain MW2).